Reading from the N-terminus, the 312-residue chain is MATHKAEAQETDFRTTGPPTDLEQCPFPPSSRKFPFESVAADSTEGWAVAAEHHLKRSGEDGGWEQPASGVEPSRPTTMASSKTVCDAQPHSMPSCGLSADTQTRATSKLPVKSKDAEMLRHLHTGGLEPDVTKVTKPRRENGQGKAAETASRRNIRSSYKPLSKQKPEEDLKDKNELLEAVNKQLHQKLTETQGELKDLTQKVELLEKFQDNCLAILESKGLNSGQETQESKQEPSTDPTDSMLLLETLKDELKLFNETAKKQMEELQALKVKLKLKEKERIQFLEQQTLGKDEASDFTIILEEMEQLLEM.

A compositionally biased stretch (basic and acidic residues) spans 1–13 (MATHKAEAQETDF). Disordered stretches follow at residues 1–32 (MATH…PSSR), 55–176 (LKRS…KDKN), and 221–242 (KGLN…DPTD). Polar residues predominate over residues 75–84 (RPTTMASSKT). Basic and acidic residues-rich tracts occupy residues 131–143 (DVTK…RENG) and 166–176 (QKPEEDLKDKN). The interval 156–312 (IRSSYKPLSK…LEEMEQLLEM (157 aa)) is interaction with SPAG5. Positions 169-210 (EEDLKDKNELLEAVNKQLHQKLTETQGELKDLTQKVELLEKF) form a coiled coil. Residues 246-288 (LLETLKDELKLFNETAKKQMEELQALKVKLKLKEKERIQFLEQ) are a coiled coil.

Part of an astrin (SPAG5)-kinastrin (SKAP) complex containing KNSTRN, SPAG5, PLK1, DYNLL1 and SGO2. Interacts with SPAG5. Directly binds to microtubules, although at relatively low affinity. Interacts with CENPE; this interaction greatly favors microtubule-binding. Interacts with DSN1/MIS13; leading to localization to kinetochores. Interacts with MAPRE1/EB1; leading to localization to the microtubule plus ends. Interacts with PRPF19. Interacts with DYNLL1. Interacts with MAP4.

The protein resides in the nucleus. It is found in the chromosome. The protein localises to the centromere. Its subcellular location is the kinetochore. It localises to the cytoplasm. The protein resides in the cytoskeleton. It is found in the spindle pole. The protein localises to the microtubule organizing center. Essential component of the mitotic spindle required for faithful chromosome segregation and progression into anaphase. Promotes the metaphase-to-anaphase transition and is required for chromosome alignment, normal timing of sister chromatid segregation, and maintenance of spindle pole architecture. The astrin (SPAG5)-kinastrin (SKAP) complex promotes stable microtubule-kinetochore attachments. Required for kinetochore oscillations and dynamics of microtubule plus-ends during live cell mitosis, possibly by forming a link between spindle microtubule plus-ends and mitotic chromosomes to achieve faithful cell division. This Rattus norvegicus (Rat) protein is Small kinetochore-associated protein (Knstrn).